A 453-amino-acid chain; its full sequence is Bifunctional protein GlmU (453 aa).

The tract at residues Met-1–Arg-227 is pyrophosphorylase. UDP-N-acetyl-alpha-D-glucosamine-binding positions include Leu-9–Gly-12, Lys-23, Gln-74, Gly-79–Thr-80, Tyr-101–Asp-103, Gly-138, Glu-152, Asn-167, and Asn-225. Residue Asp-103 participates in Mg(2+) binding. Asn-225 lines the Mg(2+) pocket. Residues Leu-228–Ala-248 form a linker region. The interval Gly-249 to Lys-453 is N-acetyltransferase. Positions 331 and 349 each coordinate UDP-N-acetyl-alpha-D-glucosamine. The Proton acceptor role is filled by His-361. 2 residues coordinate UDP-N-acetyl-alpha-D-glucosamine: Tyr-364 and Asn-375. Acetyl-CoA-binding positions include Ala-378, Asn-384–Tyr-385, Ser-403, Ala-421, and Arg-438.

The protein in the N-terminal section; belongs to the N-acetylglucosamine-1-phosphate uridyltransferase family. This sequence in the C-terminal section; belongs to the transferase hexapeptide repeat family. As to quaternary structure, homotrimer. Mg(2+) is required as a cofactor.

The protein localises to the cytoplasm. It carries out the reaction alpha-D-glucosamine 1-phosphate + acetyl-CoA = N-acetyl-alpha-D-glucosamine 1-phosphate + CoA + H(+). It catalyses the reaction N-acetyl-alpha-D-glucosamine 1-phosphate + UTP + H(+) = UDP-N-acetyl-alpha-D-glucosamine + diphosphate. Its pathway is nucleotide-sugar biosynthesis; UDP-N-acetyl-alpha-D-glucosamine biosynthesis; N-acetyl-alpha-D-glucosamine 1-phosphate from alpha-D-glucosamine 6-phosphate (route II): step 2/2. It functions in the pathway nucleotide-sugar biosynthesis; UDP-N-acetyl-alpha-D-glucosamine biosynthesis; UDP-N-acetyl-alpha-D-glucosamine from N-acetyl-alpha-D-glucosamine 1-phosphate: step 1/1. The protein operates within bacterial outer membrane biogenesis; LPS lipid A biosynthesis. Its function is as follows. Catalyzes the last two sequential reactions in the de novo biosynthetic pathway for UDP-N-acetylglucosamine (UDP-GlcNAc). The C-terminal domain catalyzes the transfer of acetyl group from acetyl coenzyme A to glucosamine-1-phosphate (GlcN-1-P) to produce N-acetylglucosamine-1-phosphate (GlcNAc-1-P), which is converted into UDP-GlcNAc by the transfer of uridine 5-monophosphate (from uridine 5-triphosphate), a reaction catalyzed by the N-terminal domain. The sequence is that of Bifunctional protein GlmU from Histophilus somni (strain 2336) (Haemophilus somnus).